The chain runs to 573 residues: Proline--tRNA ligase (573 aa).

Belongs to the class-II aminoacyl-tRNA synthetase family. ProS type 1 subfamily. Homodimer.

It is found in the cytoplasm. It carries out the reaction tRNA(Pro) + L-proline + ATP = L-prolyl-tRNA(Pro) + AMP + diphosphate. Functionally, catalyzes the attachment of proline to tRNA(Pro) in a two-step reaction: proline is first activated by ATP to form Pro-AMP and then transferred to the acceptor end of tRNA(Pro). As ProRS can inadvertently accommodate and process non-cognate amino acids such as alanine and cysteine, to avoid such errors it has two additional distinct editing activities against alanine. One activity is designated as 'pretransfer' editing and involves the tRNA(Pro)-independent hydrolysis of activated Ala-AMP. The other activity is designated 'posttransfer' editing and involves deacylation of mischarged Ala-tRNA(Pro). The misacylated Cys-tRNA(Pro) is not edited by ProRS. The polypeptide is Proline--tRNA ligase (Cupriavidus necator (strain ATCC 17699 / DSM 428 / KCTC 22496 / NCIMB 10442 / H16 / Stanier 337) (Ralstonia eutropha)).